Here is a 284-residue protein sequence, read N- to C-terminus: Diaminopimelate epimerase (284 aa).

The substrate site is built by Asn20, Gln53, and Asn73. The active-site Proton donor is Cys82. Substrate is bound by residues 83 to 84 (GN), Asn167, Asn200, and 218 to 219 (ER). Cys227 serves as the catalytic Proton acceptor. 228 to 229 (GS) serves as a coordination point for substrate.

It belongs to the diaminopimelate epimerase family. As to quaternary structure, homodimer.

The protein localises to the cytoplasm. It carries out the reaction (2S,6S)-2,6-diaminopimelate = meso-2,6-diaminopimelate. Its pathway is amino-acid biosynthesis; L-lysine biosynthesis via DAP pathway; DL-2,6-diaminopimelate from LL-2,6-diaminopimelate: step 1/1. In terms of biological role, catalyzes the stereoinversion of LL-2,6-diaminopimelate (L,L-DAP) to meso-diaminopimelate (meso-DAP), a precursor of L-lysine and an essential component of the bacterial peptidoglycan. The protein is Diaminopimelate epimerase of Xylella fastidiosa (strain 9a5c).